The chain runs to 417 residues: Serine hydroxymethyltransferase (417 aa).

Residues Leu121 and Gly125–Leu127 each bind (6S)-5,6,7,8-tetrahydrofolate. Lys229 is subject to N6-(pyridoxal phosphate)lysine. Position 355 to 357 (Ser355 to Phe357) interacts with (6S)-5,6,7,8-tetrahydrofolate.

It belongs to the SHMT family. As to quaternary structure, homodimer. Requires pyridoxal 5'-phosphate as cofactor.

The protein localises to the cytoplasm. It carries out the reaction (6R)-5,10-methylene-5,6,7,8-tetrahydrofolate + glycine + H2O = (6S)-5,6,7,8-tetrahydrofolate + L-serine. Its pathway is one-carbon metabolism; tetrahydrofolate interconversion. The protein operates within amino-acid biosynthesis; glycine biosynthesis; glycine from L-serine: step 1/1. In terms of biological role, catalyzes the reversible interconversion of serine and glycine with tetrahydrofolate (THF) serving as the one-carbon carrier. This reaction serves as the major source of one-carbon groups required for the biosynthesis of purines, thymidylate, methionine, and other important biomolecules. Also exhibits THF-independent aldolase activity toward beta-hydroxyamino acids, producing glycine and aldehydes, via a retro-aldol mechanism. This is Serine hydroxymethyltransferase from Stenotrophomonas maltophilia (strain R551-3).